The chain runs to 498 residues: Ulvan-active sulfatase (498 aa).

Positions 1-22 are cleaved as a signal peptide; sequence MNSKKTGVIILGCIAFLHIACS. Residues Asp-55, Asp-56, Cys-95, Asp-266, and His-267 each contribute to the Ca(2+) site. Catalysis depends on Cys-95, which acts as the Nucleophile. Cys-95 carries the post-translational modification 3-oxoalanine (Cys).

This sequence belongs to the sulfatase family. Ca(2+) is required as a cofactor. In terms of processing, the conversion to 3-oxoalanine (also known as C-formylglycine, FGly), of a serine or cysteine residue in prokaryotes and of a cysteine residue in eukaryotes, is critical for catalytic activity. This post-translational modification is severely defective in multiple sulfatase deficiency (MSD).

It localises to the periplasm. Sulfatase involved in ulvan degradation. Ulvan is the main polysaccharide component of the Ulvales (green seaweed) cell wall. It is composed of disaccharide building blocks comprising 3-sulfated rhamnose (Rha3S) linked to D-glucuronic acid (GlcA), L-iduronic acid (IduA), or D-xylose (Xyl). The sequence is that of Ulvan-active sulfatase from Formosa agariphila (strain DSM 15362 / KCTC 12365 / LMG 23005 / KMM 3901 / M-2Alg 35-1).